A 748-amino-acid chain; its full sequence is Meprin A subunit alpha (748 aa).

Positions 1 to 20 are cleaved as a signal peptide; that stretch reads MLWTLPVCLLSLSFSAHIAA. Positions 21-66 are excised as a propeptide; sequence VSIQHLSTGHDHDDVDVGEQQKDISEINSAAGLNLFQGDILLPRTR. One can recognise a Peptidase M12A domain in the interval 67-261; that stretch reads NALRDPSSRW…TRLNRMYNCT (195 aa). The Extracellular portion of the chain corresponds to 67 to 719; that stretch reads NALRDPSSRW…RCQAMHVHGS (653 aa). Intrachain disulfides connect cysteine 108–cysteine 260, cysteine 129–cysteine 148, and cysteine 270–cysteine 432. A glycan (N-linked (GlcNAc...) asparagine) is linked at asparagine 141. Zn(2+) is bound at residue histidine 156. The active site involves glutamate 157. The Zn(2+) site is built by histidine 160 and histidine 166. N-linked (GlcNAc...) asparagine glycans are attached at residues asparagine 223, asparagine 259, asparagine 319, asparagine 441, and asparagine 542. Residues 265-434 enclose the MAM domain; it reads TLLDHCAFEK…ITLTETPCPT (170 aa). Residues 435 to 596 form the MATH domain; the sequence is GVWTIRNISQ…DDTLIIFVDF (162 aa). The segment at 641-668 is disordered; the sequence is LPRRLDQRQPSRPKRSVENTGPMEDHNW. The 41-residue stretch at 672–712 folds into the EGF-like domain; it reads FRDPCDPNPCQNEGTCVNVKGMASCRCVSGHAFFYTGERCQ. 3 disulfide bridges follow: cysteine 676–cysteine 687, cysteine 681–cysteine 696, and cysteine 698–cysteine 711. The helical transmembrane segment at 720–739 threads the bilayer; the sequence is LLGLLIGCITALIFLTFITF. The Cytoplasmic segment spans residues 740 to 748; that stretch reads SNTYQKLRQ.

Homotetramer consisting of disulfide-linked alpha subunits, homooligomer consisting of disulfide-linked alpha subunit homodimers, or heterotetramer of two alpha and two beta subunits formed by non-covalent association of two disulfide-linked heterodimers. Interacts with MBL2 through its carbohydrate moiety. This interaction may inhibit its catalytic activity. Requires Zn(2+) as cofactor. N-glycosylated; contains GlcNAc, galactose, mannose and a small amount of fucose. As to expression, colocalized with E-24.11 in proximal tubules of juxtamedullary nephrons.

Its subcellular location is the membrane. It catalyses the reaction Hydrolysis of protein and peptide substrates preferentially on carboxyl side of hydrophobic residues.. With respect to regulation, inhibited by actinonin. This is Meprin A subunit alpha (Mep1a) from Rattus norvegicus (Rat).